A 303-amino-acid chain; its full sequence is Bifunctional protein FolD (303 aa).

NADP(+) is bound by residues 168–170 (GRS), Thr197, and Val238.

This sequence belongs to the tetrahydrofolate dehydrogenase/cyclohydrolase family. In terms of assembly, homodimer.

The enzyme catalyses (6R)-5,10-methylene-5,6,7,8-tetrahydrofolate + NADP(+) = (6R)-5,10-methenyltetrahydrofolate + NADPH. It catalyses the reaction (6R)-5,10-methenyltetrahydrofolate + H2O = (6R)-10-formyltetrahydrofolate + H(+). The protein operates within one-carbon metabolism; tetrahydrofolate interconversion. Functionally, catalyzes the oxidation of 5,10-methylenetetrahydrofolate to 5,10-methenyltetrahydrofolate and then the hydrolysis of 5,10-methenyltetrahydrofolate to 10-formyltetrahydrofolate. The polypeptide is Bifunctional protein FolD (Desulfosudis oleivorans (strain DSM 6200 / JCM 39069 / Hxd3) (Desulfococcus oleovorans)).